The following is a 1196-amino-acid chain: Probable cation-transporting ATPase 13A4 (1196 aa).

At 1–31 (MGHFEKGQHALLNEGEENEMEIFGYRTQGCR) the chain is on the cytoplasmic side. The stretch at 32 to 52 (KSLCLAGSIFSFGILPLVFYW) is an intramembrane region. Residues 53 to 197 (RPAWHVWAHC…DVEVTPIWKL (145 aa)) lie on the Cytoplasmic side of the membrane. Residues 198–218 (LIKEVLNPFYIFQLFSVCLWF) traverse the membrane as a helical segment. Residues 219 to 223 (SEDYK) are Lumenal-facing. Residues 224-244 (EYAFAIIIMSIISISLTVYDL) form a helical membrane-spanning segment. At 245–400 (REQSVKLHHL…NFQLYRDAIR (156 aa)) the chain is on the cytoplasmic side. Residues 401–421 (FLLCLVGTATIGMIYTLCVYV) form a helical membrane-spanning segment. The Lumenal segment spans residues 422-436 (LSGEPPEEVVRKALD). Residues 437–457 (VITIAVPPALPAALTTGIIYA) form a helical membrane-spanning segment. The Cytoplasmic portion of the chain corresponds to 458–900 (QRRLKKRGIF…KEGRAALVTS (443 aa)). The active-site 4-aspartylphosphate intermediate is Asp-486. Positions 848 and 852 each coordinate Mg(2+). A helical transmembrane segment spans residues 901–921 (FCMFKYMALYSMIQYVGVLLL). The Lumenal portion of the chain corresponds to 922–932 (YWETNSLSNYQ). A helical membrane pass occupies residues 933 to 953 (FLFQDLAITTLIGVTMNLNGA). Residues 954 to 972 (YPKLVPFRPAGRLISPPLL) lie on the Cytoplasmic side of the membrane. A helical membrane pass occupies residues 973–993 (LSVIFNILLSLAMHIAGFILV). Over 994 to 1035 (QRQPWYSVEIHSACTVQNESISELTMSPTAPEKMESNSTFTS) the chain is Lumenal. Residues 1036–1056 (FENTTVWFLGTINCITVALVF) traverse the membrane as a helical segment. The Cytoplasmic portion of the chain corresponds to 1057–1070 (SKGKPFRQPTYTNY). Residues 1071–1091 (IFVLVLIIQLGVCLFILFADI) traverse the membrane as a helical segment. Over 1092–1109 (PELYRRLDLLCTPVLWRA) the chain is Lumenal. The chain crosses the membrane as a helical span at residues 1110–1130 (SIVIMLSLNFIVSLVAEEAVI). Residues 1131–1196 (ENRALWMMIK…PVFESNEEQL (66 aa)) are Cytoplasmic-facing.

Belongs to the cation transport ATPase (P-type) (TC 3.A.3) family. Type V subfamily. Expressed in heart, placenta, liver, skeletal muscles, and pancreas. Lower levels of expression are also detected in brain, lung and kidney. Weakly expressed in the adult brain. Expression in fetal brain is higher than in adult brain, with levels similar to several other fetal tissues including spleen and skeletal muscle. In adult brain expressed at low levels in all tissues examined, including the temporal lobe and putamen. Highly expressed in the respiratory and integumentary systems.

The protein localises to the early endosome membrane. It is found in the late endosome membrane. Its subcellular location is the recycling endosome membrane. It catalyses the reaction ATP + H2O = ADP + phosphate + H(+). This Homo sapiens (Human) protein is Probable cation-transporting ATPase 13A4 (ATP13A4).